A 379-amino-acid polypeptide reads, in one-letter code: DnaJ homolog subfamily B member 14 (379 aa).

The Cytoplasmic portion of the chain corresponds to 1–244 (MEGNRDEAEK…GHEREEERGD (244 aa)). Positions 55-94 (STAGNSPHCRKPSGSGDQSKPNCTKDSTSGSGEGGKGYTK) are disordered. Residues 69–84 (SGDQSKPNCTKDSTSG) show a composition bias toward polar residues. The 65-residue stretch at 108–172 (NYYEVLGVTK…EKRKQYDLTG (65 aa)) folds into the J domain. Residues 219–241 (SNGRAGYSQQHQHRHSGHEREEE) are disordered. A helical membrane pass occupies residues 245 to 265 (GGFSVFIQLMPIIVLILVSLL). Over 266-379 (SQLMVSNPPY…ERLTSLYKGG (114 aa)) the chain is Lumenal.

The protein belongs to the DnaJ family. DNAJB12/DNAJB14 subfamily. In terms of assembly, interacts (via J domain) with HSPA8/Hsc70. Forms a multiprotein complex, at least composed of DNAJB12, DNAJB14, HSPA8/Hsc70 and SGTA; interaction with DNAJB14 and HSPA8/Hsc70 is direct.

Its subcellular location is the endoplasmic reticulum membrane. It localises to the nucleus membrane. Its function is as follows. Acts as a co-chaperone with HSPA8/Hsc70; required to promote protein folding and trafficking, prevent aggregation of client proteins, and promote unfolded proteins to endoplasmic reticulum-associated degradation (ERAD) pathway. Acts by determining HSPA8/Hsc70's ATPase and polypeptide-binding activities. Can also act independently of HSPA8/Hsc70: together with DNAJB12, acts as a chaperone that promotes maturation of potassium channels KCND2 and KCNH2 by stabilizing nascent channel subunits and assembling them into tetramers. While stabilization of nascent channel proteins is dependent on HSPA8/Hsc70, the process of oligomerization of channel subunits is independent of HSPA8/Hsc70. When overexpressed, forms membranous structures together with DNAJB12 and HSPA8/Hsc70 within the nucleus; the role of these structures, named DJANGOs, is still unclear. In terms of biological role, (Microbial infection) In case of infection by polyomavirus, involved in the virus endoplasmic reticulum membrane penetration and infection. This chain is DnaJ homolog subfamily B member 14, found in Homo sapiens (Human).